The sequence spans 37 residues: Large ribosomal subunit protein bL36 (37 aa).

It belongs to the bacterial ribosomal protein bL36 family.

The chain is Large ribosomal subunit protein bL36 from Treponema pallidum (strain Nichols).